A 132-amino-acid polypeptide reads, in one-letter code: Fatty acid-binding protein, adipocyte (132 aa).

A Nuclear localization signal motif is present at residues 22–32; it reads KELGVGFATRK. 2 residues coordinate (9Z,12Z)-octadecadienoate: Arg107 and Arg127.

It belongs to the calycin superfamily. Fatty-acid binding protein (FABP) family. Monomer.

The protein localises to the cytoplasm. It is found in the nucleus. Its function is as follows. Lipid transport protein in adipocytes. Binds both long chain fatty acids and retinoic acid. Delivers long-chain fatty acids and retinoic acid to their cognate receptors in the nucleus. Has the highest binding affinity for linoleic acid and decreasing relative affinity for eicosapentaenoic acid (EPA), alpha-linolenic acid (ALA), docosahexaenoic acid (DHA), oleic acid, palmitic acid and stearic acid, respectively. The protein is Fatty acid-binding protein, adipocyte of Pygoscelis papua (Gentoo penguin).